Here is a 360-residue protein sequence, read N- to C-terminus: Phospho-N-acetylmuramoyl-pentapeptide-transferase (360 aa).

10 consecutive transmembrane segments (helical) span residues 24 to 44 (RAVM…PWTI), 69 to 89 (GTPT…TLLW), 92 to 112 (WANP…ALGF), 133 to 153 (MVWQ…LAAN), 158 to 178 (ILIV…GFLV), 199 to 219 (GLAT…AYVS), 239 to 259 (VAIF…FNAY), 263 to 283 (VFMG…VAVI), 288 to 308 (FVLV…MLQV), and 337 to 357 (QVVV…LSTL).

The protein belongs to the glycosyltransferase 4 family. MraY subfamily. Requires Mg(2+) as cofactor.

It localises to the cell inner membrane. The catalysed reaction is UDP-N-acetyl-alpha-D-muramoyl-L-alanyl-gamma-D-glutamyl-meso-2,6-diaminopimeloyl-D-alanyl-D-alanine + di-trans,octa-cis-undecaprenyl phosphate = di-trans,octa-cis-undecaprenyl diphospho-N-acetyl-alpha-D-muramoyl-L-alanyl-D-glutamyl-meso-2,6-diaminopimeloyl-D-alanyl-D-alanine + UMP. It participates in cell wall biogenesis; peptidoglycan biosynthesis. Its function is as follows. Catalyzes the initial step of the lipid cycle reactions in the biosynthesis of the cell wall peptidoglycan: transfers peptidoglycan precursor phospho-MurNAc-pentapeptide from UDP-MurNAc-pentapeptide onto the lipid carrier undecaprenyl phosphate, yielding undecaprenyl-pyrophosphoryl-MurNAc-pentapeptide, known as lipid I. In Neisseria meningitidis serogroup C (strain 053442), this protein is Phospho-N-acetylmuramoyl-pentapeptide-transferase.